The following is a 148-amino-acid chain: DNA-directed RNA polymerase II subunit GRINL1A, isoforms 4/5 (148 aa).

The disordered stretch occupies residues 1–66 (MATPARAPES…AEFGGAAGNV (66 aa)). A compositionally biased stretch (low complexity) spans 53–66 (GLGAAEFGGAAGNV).

This is DNA-directed RNA polymerase II subunit GRINL1A, isoforms 4/5 (POLR2M) from Homo sapiens (Human).